The primary structure comprises 80 residues: RNA-binding protein Hfq (80 aa).

The 61-residue stretch at 10 to 70 (DLFLNTVRKQ…ISTIMPGQPL (61 aa)) folds into the Sm domain.

It belongs to the Hfq family. As to quaternary structure, homohexamer.

Functionally, RNA chaperone that binds small regulatory RNA (sRNAs) and mRNAs to facilitate mRNA translational regulation in response to envelope stress, environmental stress and changes in metabolite concentrations. Also binds with high specificity to tRNAs. The sequence is that of RNA-binding protein Hfq from Rhizobium meliloti (strain 1021) (Ensifer meliloti).